The primary structure comprises 151 residues: Small ribosomal subunit protein uS11 (151 aa).

The tract at residues 130-151 (EDVTPIPSDSTRRKGGRRGRRL) is disordered. Residues 142–151 (RKGGRRGRRL) show a composition bias toward basic residues.

This sequence belongs to the universal ribosomal protein uS11 family.

This is Small ribosomal subunit protein uS11 from Aedes aegypti (Yellowfever mosquito).